We begin with the raw amino-acid sequence, 288 residues long: UPF0761 membrane protein HSM_1104 (288 aa).

The next 6 membrane-spanning stretches (helical) occupy residues 36–56, 92–112, 127–147, 176–196, 200–220, and 240–260; these read TLAL…FPVF, QMSA…IHSI, PAIF…IVIA, LLSL…YMVV, KVSI…FTLG, and AMAT…AVLL.

This sequence belongs to the UPF0761 family.

The protein localises to the cell inner membrane. The chain is UPF0761 membrane protein HSM_1104 from Histophilus somni (strain 2336) (Haemophilus somnus).